A 424-amino-acid chain; its full sequence is Proline--tRNA ligase (424 aa).

This sequence belongs to the class-II aminoacyl-tRNA synthetase family. ProS type 2 subfamily. Homodimer.

The protein resides in the cytoplasm. The catalysed reaction is tRNA(Pro) + L-proline + ATP = L-prolyl-tRNA(Pro) + AMP + diphosphate. Functionally, catalyzes the attachment of proline to tRNA(Pro) in a two-step reaction: proline is first activated by ATP to form Pro-AMP and then transferred to the acceptor end of tRNA(Pro). The sequence is that of Proline--tRNA ligase from Ehrlichia canis (strain Jake).